The sequence spans 495 residues: Transcription termination/antitermination protein NusA (495 aa).

Residues 135 to 200 (GKIVTGTVKK…KTAQLFVTRS (66 aa)) form the S1 motif domain. A KH domain is found at 302 to 374 (NHSMDIAVEA…LDEEFAQILV (73 aa)).

It belongs to the NusA family. In terms of assembly, monomer. Binds directly to the core enzyme of the DNA-dependent RNA polymerase and to nascent RNA.

It is found in the cytoplasm. In terms of biological role, participates in both transcription termination and antitermination. The protein is Transcription termination/antitermination protein NusA of Haemophilus influenzae (strain ATCC 51907 / DSM 11121 / KW20 / Rd).